The following is a 334-amino-acid chain: Cytoskeleton protein RodZ (334 aa).

Topologically, residues 1–111 (MNTEATHDQN…LGKRRKKRDG (111 aa)) are cytoplasmic. The 53-residue stretch at 19–71 (LRNAREQLGLSQQAVAERLCLKVSTVRDIEEDKAPSDLASTFLRGYIRSYARL) folds into the HTH cro/C1-type domain. Residues 30–49 (QQAVAERLCLKVSTVRDIEE) constitute a DNA-binding region (H-T-H motif). A helical; Signal-anchor for type II membrane protein membrane pass occupies residues 112–132 (WLMSFTWLVLFVVVGLTGAWW). At 133 to 334 (WQNHKAQQEE…TLNAEPTPAQ (202 aa)) the chain is on the periplasmic side. 2 disordered regions span residues 155–207 (NADK…ATQN) and 221–241 (ATSA…SQAG). The segment covering 176–207 (TTPAQTAPAPATPVDSTAATQTPAATATATQN) has biased composition (low complexity).

This sequence belongs to the RodZ family.

The protein resides in the cell inner membrane. Cytoskeletal protein that is involved in cell-shape control through regulation of the length of the long axis. This chain is Cytoskeleton protein RodZ, found in Salmonella schwarzengrund (strain CVM19633).